The primary structure comprises 277 residues: Uridine-cytidine kinase 1 (277 aa).

An ATP-binding site is contributed by 24–32; the sequence is GGTASGKST. D81, Y109, H114, R163, R172, and Q180 together coordinate substrate. An ATP-binding site is contributed by D209. The segment at 241–277 is disordered; sequence NHGRSLKRGVAEHGENPSGSSSNLTKRPLLEPSTRPH.

Belongs to the uridine kinase family.

It catalyses the reaction uridine + ATP = UMP + ADP + H(+). The catalysed reaction is cytidine + ATP = CMP + ADP + H(+). It functions in the pathway pyrimidine metabolism; CTP biosynthesis via salvage pathway; CTP from cytidine: step 1/3. The protein operates within pyrimidine metabolism; UMP biosynthesis via salvage pathway; UMP from uridine: step 1/1. In terms of biological role, phosphorylates uridine and cytidine to uridine monophosphate and cytidine monophosphate. Does not phosphorylate deoxyribonucleosides or purine ribonucleosides. Can use ATP or GTP as a phosphate donor. The sequence is that of Uridine-cytidine kinase 1 (uck1) from Danio rerio (Zebrafish).